The sequence spans 149 residues: Putative pre-16S rRNA nuclease (149 aa).

This sequence belongs to the YqgF nuclease family.

Its subcellular location is the cytoplasm. Could be a nuclease involved in processing of the 5'-end of pre-16S rRNA. This chain is Putative pre-16S rRNA nuclease, found in Burkholderia multivorans (strain ATCC 17616 / 249).